We begin with the raw amino-acid sequence, 511 residues long: Protein phosphatase 2C 7 (511 aa).

Residues 1-19 form the signal peptide; that stretch reads MEEISPAVALTLGLANTMC. Residues 188 to 501 form the PPM-type phosphatase domain; that stretch reads LWGTISICGG…DNISIIVIDL (314 aa). Mn(2+) is bound by residues aspartate 242, glycine 243, aspartate 432, and aspartate 492.

Belongs to the PP2C family. In terms of assembly, interacts with PYL13. It depends on Mg(2+) as a cofactor. Requires Mn(2+) as cofactor. Expressed in seeds.

The enzyme catalyses O-phospho-L-seryl-[protein] + H2O = L-seryl-[protein] + phosphate. The catalysed reaction is O-phospho-L-threonyl-[protein] + H2O = L-threonyl-[protein] + phosphate. Functionally, key component and repressor of the abscisic acid (ABA) signaling pathway that regulates numerous ABA responses, such as stomatal closure, seed germination and inhibition of vegetative growth. This chain is Protein phosphatase 2C 7 (HAB2), found in Arabidopsis thaliana (Mouse-ear cress).